The chain runs to 113 residues: Small ribosomal subunit protein bS6 (113 aa).

Belongs to the bacterial ribosomal protein bS6 family.

Functionally, binds together with bS18 to 16S ribosomal RNA. This Buchnera aphidicola subsp. Schizaphis graminum (strain Sg) protein is Small ribosomal subunit protein bS6.